A 101-amino-acid polypeptide reads, in one-letter code: Small ribosomal subunit protein uS14 (101 aa).

Basic and acidic residues predominate over residues 1–10 (MAKKSAIEKN). A disordered region spans residues 1–23 (MAKKSAIEKNNRRKKMTKNAAPK). The segment covering 11–23 (NRRKKMTKNAAPK) has biased composition (basic residues).

This sequence belongs to the universal ribosomal protein uS14 family. In terms of assembly, part of the 30S ribosomal subunit. Contacts proteins S3 and S10.

Binds 16S rRNA, required for the assembly of 30S particles and may also be responsible for determining the conformation of the 16S rRNA at the A site. This Rhodopseudomonas palustris (strain TIE-1) protein is Small ribosomal subunit protein uS14.